The sequence spans 271 residues: Dipeptidyl-peptidase 6 (271 aa).

SH3b domains lie at methionine 1–aspartate 64 and glutamine 72–isoleucine 140. One can recognise a NlpC/P60 domain in the interval histidine 148–glycine 268. The active-site Nucleophile is cysteine 178. Histidine 224 functions as the Proton acceptor in the catalytic mechanism. The active site involves histidine 236.

It belongs to the peptidase C40 family.

The protein localises to the cytoplasm. Functionally, involved in cell sporulation. Hydrolyzes gamma-D-Glu-L-(meso)A2pm linkages only in those peptide units that have a free N-terminal L-alanine. The sequence is that of Dipeptidyl-peptidase 6 from Lysinibacillus sphaericus (Bacillus sphaericus).